A 259-amino-acid chain; its full sequence is Ras-related protein Rab-34 (259 aa).

M1 is modified (N-acetylmethionine). Residues S62, V63, G64, K65, T66, D78, Y81, and T84 each coordinate GTP. Mg(2+) is bound at residue T66. The Switch 1 signature appears at 71–89 (RFCKDTFDKNYKATIGVDF). Mg(2+)-binding residues include T84 and D107. The short motif at 108 to 127 (TAGQERFKCIASTYYRGAQA) is the Switch 2 element. G110, K167, D169, and S198 together coordinate GTP. Phosphoserine is present on residues S241 and S244. 2 S-geranylgeranyl cysteine lipidation sites follow: C257 and C258.

The protein belongs to the small GTPase superfamily. Rab family. In terms of assembly, interacts with RILP. The GTP-bound form interacts with REP15. Mg(2+) serves as cofactor.

It is found in the cytoplasm. It localises to the golgi apparatus. The protein localises to the cytoplasmic vesicle. Its subcellular location is the phagosome. The protein resides in the phagosome membrane. It is found in the cell projection. It localises to the cilium. The protein localises to the cytoskeleton. Its subcellular location is the microtubule organizing center. The protein resides in the centrosome. It is found in the centriole. It catalyses the reaction GTP + H2O = GDP + phosphate + H(+). Its activity is regulated as follows. Regulated by guanine nucleotide exchange factors (GEFs) which promote the exchange of bound GDP for free GTP. Regulated by GTPase activating proteins (GAPs) which increase the GTP hydrolysis activity. Inhibited by GDP dissociation inhibitors (GDIs). Functionally, the small GTPases Rab are key regulators of intracellular membrane trafficking, from the formation of transport vesicles to their fusion with membranes. Rabs cycle between an inactive GDP-bound form and an active GTP-bound form that is able to recruit to membranes different sets of downstream effectors directly responsible for vesicle formation, movement, tethering and fusion. RAB34 transports protein involved in the redistribution of lysosomes to the peri-Golgi region. Plays a role in the maturation of phagosomes that engulf pathogens, such as S.aureus and M.tuberculosis. Plays a role in the fusion of phagosomes with lysosomes. Involved in ciliogenesis. In particular, it is required for early steps of the intracellular cilium assembly pathway initiated by trafficking and docking of ciliary vesicles to the centrioles in the cytoplasm, followed by axoneme formation in the cytoplasm. After axoneme elongation, the centrioles migrate close to the cell surface so that ciliary vesicles can fuse with the plasma membrane to expose cilia to the extracellular space. It seems dispensable for ciliogenesis via the extracellular pathway where cilium assembly begins after migration and docking of the centriole to the plasma membrane. Also acts as a positive regulator of hedgehog signaling and regulates ciliary function. The chain is Ras-related protein Rab-34 from Homo sapiens (Human).